The sequence spans 30 residues: Photosystem I reaction center subunit XII (30 aa).

Residues Ile7–Thr26 traverse the membrane as a helical segment.

This sequence belongs to the PsaM family.

It localises to the plastid. The protein localises to the chloroplast thylakoid membrane. This Gracilaria tenuistipitata var. liui (Red alga) protein is Photosystem I reaction center subunit XII.